We begin with the raw amino-acid sequence, 294 residues long: Holothin acyltransferase (294 aa).

One can recognise an N-acetyltransferase domain in the interval 17 to 146 (WTSKPASLEE…SRLVGIHNQQ (130 aa)).

It catalyses the reaction marinoloyl-CoA C + holothin = thiomarinol C + CoA. The enzyme catalyses pseudomonoyl-CoA C + holothin = pseudomonic acid C--holothin + CoA. It participates in antibiotic biosynthesis. Functionally, acyltransferase that catalyzes the formation of pseudomonic acid C-holothin (PAC-holothin), a thiomarinol analog, from pseudomonoyl-CoA C (PAC-CoA) and holothin. Accepts linear CoA substrates of different lengths, including propionyl-, hexanoyl-, octanoyl-, oleoyl- and dodecanoyl-CoA, readily converting all into the corresponding acyl-holothin adducts. In vivo, is probably involved in the biosynthesis of thiomarinol, a naturally occurring double-headed antibiotic. The sequence is that of Holothin acyltransferase from Pseudoalteromonas sp. (strain SANK 73390).